An 804-amino-acid chain; its full sequence is Tubulin polyglutamylase TTLL13 (804 aa).

Residues 1–41 (MEPNNCKTSESEEDDIEEEESEEECVREESTTPNSTQQALR) are disordered. The stretch at 4–30 (NNCKTSESEEDDIEEEESEEECVREES) forms a coiled coil. A compositionally biased stretch (acidic residues) spans 11–26 (SEEDDIEEEESEEECV). Residues 85-430 (RRPLAINLTN…RGCDKKKVIE (346 aa)) enclose the TTL domain. Residues Lys-202, 208–209 (QG), 230–233 (QQYI), and 243–245 (KFD) each bind ATP. Gln-208 provides a ligand contact to a protein. Arg-269 lines the L-glutamate pocket. ATP is bound at residue 291–292 (TN). Tyr-293 and Lys-311 together coordinate L-glutamate. Residues Asp-376, Glu-389, and Asn-391 each coordinate Mg(2+). His-392 is an a protein binding site. The tract at residues 401–482 (RLDREVKDAL…LGGYRRIYPG (82 aa)) is c-MTBD region. Lys-407 is an L-glutamate binding site. 2 coiled-coil regions span residues 504 to 541 (ASKA…KEQN) and 585 to 609 (QDIV…IRSL). Positions 519 to 556 (IRLKQEQQENPGTKKRKENKEQNQGESAGEKSRSRTAT) are disordered. Residues 536 to 551 (ENKEQNQGESAGEKSR) are compositionally biased toward basic and acidic residues.

Belongs to the tubulin--tyrosine ligase family. The cofactor is Mg(2+). As to expression, highly expressed in heart and testis. Expressed in brain, kidney, liver, lung, muscle and trachea. In the brain, expressed in ependymal cilia, cortex, corpus callosum and striatum.

The enzyme catalyses (L-glutamyl)(n)-gamma-L-glutamyl-L-glutamyl-[protein] + L-glutamate + ATP = (L-glutamyl)(n+1)-gamma-L-glutamyl-L-glutamyl-[protein] + ADP + phosphate + H(+). Polyglutamylase which modifies tubulin, generating polyglutamate side chains of variable lengths on the gamma-carboxyl group of specific glutamate residues within the C-terminal tail of tubulin. Mediates ATP-dependent polyglutamate side-chain elongation of the polyglutamylation reaction but not the initiation step. Preferentially modifies the alpha-tubulin tail over a beta-tail. The polypeptide is Tubulin polyglutamylase TTLL13 (Mus musculus (Mouse)).